An 810-amino-acid chain; its full sequence is E3 ubiquitin-protein ligase RNF10 (810 aa).

The span at 1-31 (MPQSSPSAAATASDMDKNSGSSSSSASSGSS) shows a compositional bias: low complexity. A disordered region spans residues 1 to 119 (MPQSSPSAAA…SFNGGRRDEV (119 aa)). Residue Ser5 is modified to Phosphoserine. Residues 76 to 92 (NFINQSRRSNSQKSKTF) show a composition bias toward polar residues. An interaction with MEOX2 region spans residues 101–185 (GGSSKLFSSS…FNKELFLQAN (85 aa)). Residues 104 to 113 (SKLFSSSFNG) show a composition bias toward low complexity. A phosphoserine mark is found at Ser110 and Ser128. The RING-type zinc finger occupies 225–267 (CPICLYPPTAAKITRCGHIFCWACILHYLSLSEKTWSKCPICY). Disordered regions lie at residues 598-623 (KRKR…EENK), 652-674 (DSAL…LSRS), 722-759 (ADVW…PVPS), and 775-810 (LDTP…VHTK). The span at 607 to 623 (AREERRRERRIEMEENK) shows a compositional bias: basic and acidic residues. Polar residues predominate over residues 652-661 (DSALGSTSTE). Residues 662 to 674 (GRGALSLSPLSRS) are compositionally biased toward low complexity. Basic and acidic residues predominate over residues 722–735 (ADVWPKTAPKKDEN). Polar residues predominate over residues 801-810 (LFSTSVVHTK).

The protein belongs to the RNF10 family. In terms of assembly, interacts with MEOX2.

The protein resides in the cytoplasm. Its subcellular location is the nucleus. It catalyses the reaction S-ubiquitinyl-[E2 ubiquitin-conjugating enzyme]-L-cysteine + [acceptor protein]-L-lysine = [E2 ubiquitin-conjugating enzyme]-L-cysteine + N(6)-ubiquitinyl-[acceptor protein]-L-lysine.. The protein operates within protein modification; protein ubiquitination. Functionally, E3 ubiquitin-protein ligase that catalyzes monoubiquitination of 40S ribosomal proteins RPS2/us5 and RPS3/us3 in response to ribosome stalling. Part of a ribosome quality control that takes place when ribosomes have stalled during translation initiation (iRQC): RNF10 acts by mediating monoubiquitination of RPS2/us5 and RPS3/us3, promoting their degradation by the proteasome. Also promotes ubiquitination of 40S ribosomal proteins in response to ribosome stalling during translation elongation. The action of RNF10 in iRQC is counteracted by USP10. May also act as a transcriptional factor involved in the regulation of MAG (Myelin-associated glycoprotein) expression. Acts as a regulator of Schwann cell differentiation and myelination. This chain is E3 ubiquitin-protein ligase RNF10 (RNF10), found in Bos taurus (Bovine).